Consider the following 358-residue polypeptide: Protein-glutamate methylesterase/protein-glutamine glutaminase 3 (358 aa).

A Response regulatory domain is found at 2 to 118 (KILVVDDSAL…CGRLQEVAPL (117 aa)). Residue D52 is modified to 4-aspartylphosphate. The region spanning 155–325 (NNEDHQLAIM…VPSMPEALLK (171 aa)) is the CheB-type methylesterase domain. Residues S167, H194, and D291 contribute to the active site.

Belongs to the CheB family. Phosphorylated by CheA. Phosphorylation of the N-terminal regulatory domain activates the methylesterase activity.

It is found in the cytoplasm. It carries out the reaction [protein]-L-glutamate 5-O-methyl ester + H2O = L-glutamyl-[protein] + methanol + H(+). The catalysed reaction is L-glutaminyl-[protein] + H2O = L-glutamyl-[protein] + NH4(+). In terms of biological role, involved in chemotaxis. Part of a chemotaxis signal transduction system that modulates chemotaxis in response to various stimuli. Catalyzes the demethylation of specific methylglutamate residues introduced into the chemoreceptors (methyl-accepting chemotaxis proteins or MCP) by CheR. Also mediates the irreversible deamidation of specific glutamine residues to glutamic acid. This is Protein-glutamate methylesterase/protein-glutamine glutaminase 3 from Vibrio cholerae serotype O1 (strain ATCC 39315 / El Tor Inaba N16961).